Here is a 64-residue protein sequence, read N- to C-terminus: Translational regulator CsrA (64 aa).

It belongs to the CsrA/RsmA family. Homodimer; the beta-strands of each monomer intercalate to form a hydrophobic core, while the alpha-helices form wings that extend away from the core.

Its subcellular location is the cytoplasm. A key translational regulator that binds mRNA to regulate translation initiation and/or mRNA stability. Mediates global changes in gene expression, shifting from rapid growth to stress survival by linking envelope stress, the stringent response and the catabolite repression systems. Usually binds in the 5'-UTR; binding at or near the Shine-Dalgarno sequence prevents ribosome-binding, repressing translation, binding elsewhere in the 5'-UTR can activate translation and/or stabilize the mRNA. Its function is antagonized by small RNA(s). The protein is Translational regulator CsrA of Thioalkalivibrio sulfidiphilus (strain HL-EbGR7).